Reading from the N-terminus, the 415-residue chain is MDHEHVREVDPEVADALAGERDRQEQTLAMIASENHVSEAVLEAQGSVLTNKYAEGYPGERYYAGCEYADEVETLAIDRAKELWGADHVNVQPHSGTQANQAVYYAVLDPGDKILSLDLNHGGHLSHGHPANFTGQIYEVEQYEVDADTGYIDYEGLREAAEEFEPDIVVSGYSAYPRTVDWEEIQAAADAVDAYHLADIAHITGLVAAGVHPSPVGVADFVTGSTHKTIRAGRGGIVMCDEEFADDIDKAVFPGGQGGPLMHNIAGKAVGFKEALDPSFDEYAQNVVDNAEVLAETLQDHGFSLVSGGTDNHLVLVDLRDSHPDLPGGDAADALAAANIVLNGNTVPGETRSPFNPSGIRVGTAGVTTRGFDADVMEEVGDLIHRVVDNVDSDDVIYEVGERVVELCDEHPLYE.

(6S)-5,6,7,8-tetrahydrofolate-binding positions include L119 and G123–L125. K228 carries the post-translational modification N6-(pyridoxal phosphate)lysine. A (6S)-5,6,7,8-tetrahydrofolate-binding site is contributed by S353–F355.

Belongs to the SHMT family. As to quaternary structure, homodimer. Pyridoxal 5'-phosphate is required as a cofactor.

Its subcellular location is the cytoplasm. It catalyses the reaction (6R)-5,10-methylene-5,6,7,8-tetrahydrofolate + glycine + H2O = (6S)-5,6,7,8-tetrahydrofolate + L-serine. It participates in one-carbon metabolism; tetrahydrofolate interconversion. The protein operates within amino-acid biosynthesis; glycine biosynthesis; glycine from L-serine: step 1/1. Functionally, catalyzes the reversible interconversion of serine and glycine with tetrahydrofolate (THF) serving as the one-carbon carrier. Also exhibits THF-independent aldolase activity toward beta-hydroxyamino acids, producing glycine and aldehydes, via a retro-aldol mechanism. The polypeptide is Serine hydroxymethyltransferase (Halorubrum lacusprofundi (strain ATCC 49239 / DSM 5036 / JCM 8891 / ACAM 34)).